The chain runs to 495 residues: Beta-galactoside alpha-2,6-sialyltransferase 2 (495 aa).

Residues 1–10 (MKPHLKQWRQ) lie on the Cytoplasmic side of the membrane. A helical; Signal-anchor for type II membrane protein transmembrane segment spans residues 11–31 (GMLCGVFAWGLFFVVIFLYFT). The Lumenal segment spans residues 32-495 (DSSPAKPAPS…LQAVRCPPGA (464 aa)). Disordered regions lie at residues 63 to 90 (GASE…LRTW) and 107 to 165 (GRTS…EDGE). The span at 134–143 (PEGARPPRAA) shows a compositional bias: low complexity. A compositionally biased stretch (basic residues) spans 144-153 (PGRRAKRGPR). Intrachain disulfides connect Cys225–Cys491, Cys268–Cys420, and Cys438–Cys449. N-linked (GlcNAc...) asparagine glycans are attached at residues Asn279 and Asn309.

Belongs to the glycosyltransferase 29 family.

It is found in the golgi apparatus. Its subcellular location is the golgi stack membrane. The enzyme catalyses a beta-D-galactoside + CMP-N-acetyl-beta-neuraminate = an N-acetyl-alpha-neuraminyl-(2-&gt;6)-beta-D-galactosyl derivative + CMP + H(+). Its function is as follows. Transfers sialic acid from the donor of substrate CMP-sialic acid to galactose containing acceptor substrates. Has alpha-2,6-sialyltransferase activity toward oligosaccharides that have the Gal-beta-1,4-GlcNAc sequence at the non-reducing end of their carbohydrate groups, but it has weak or no activities toward glycoproteins and glycolipids. The protein is Beta-galactoside alpha-2,6-sialyltransferase 2 (ST6GAL2) of Bos taurus (Bovine).